The following is a 323-amino-acid chain: Acetyl-coenzyme A carboxylase carboxyl transferase subunit alpha (323 aa).

The region spanning 39–293 (RLAGKSQQLT…KRSLAESLRQ (255 aa)) is the CoA carboxyltransferase C-terminal domain.

It belongs to the AccA family. Acetyl-CoA carboxylase is a heterohexamer composed of biotin carboxyl carrier protein (AccB), biotin carboxylase (AccC) and two subunits each of ACCase subunit alpha (AccA) and ACCase subunit beta (AccD).

It localises to the cytoplasm. It catalyses the reaction N(6)-carboxybiotinyl-L-lysyl-[protein] + acetyl-CoA = N(6)-biotinyl-L-lysyl-[protein] + malonyl-CoA. It functions in the pathway lipid metabolism; malonyl-CoA biosynthesis; malonyl-CoA from acetyl-CoA: step 1/1. Component of the acetyl coenzyme A carboxylase (ACC) complex. First, biotin carboxylase catalyzes the carboxylation of biotin on its carrier protein (BCCP) and then the CO(2) group is transferred by the carboxyltransferase to acetyl-CoA to form malonyl-CoA. The chain is Acetyl-coenzyme A carboxylase carboxyl transferase subunit alpha from Cupriavidus necator (strain ATCC 17699 / DSM 428 / KCTC 22496 / NCIMB 10442 / H16 / Stanier 337) (Ralstonia eutropha).